The chain runs to 287 residues: Cbb3-type cytochrome c oxidase subunit FixP (287 aa).

Residues 1–33 are Cytoplasmic-facing; that stretch reads MSQKHIDELSGVETTGHEWDGIQELNNPMPRWW. Residues 34 to 54 form a helical membrane-spanning segment; that stretch reads IWTFYVTILWAIGYAIAYPAI. The Periplasmic portion of the chain corresponds to 55-287; it reads PMITSATNGY…IFVHALGGGT (233 aa). 2 Cytochrome c domains span residues 108–196 and 203–284; these read FAIA…WGLT and GLAA…HALG. Heme c-binding residues include Cys-121, Cys-124, His-125, Met-173, Cys-216, Cys-219, His-220, and Met-261.

This sequence belongs to the CcoP / FixP family. Component of the cbb3-type cytochrome c oxidase at least composed of FixN, FixO, FixQ and FixP. Requires heme c as cofactor.

Its subcellular location is the cell inner membrane. It participates in energy metabolism; oxidative phosphorylation. C-type cytochrome. Part of the cbb3-type cytochrome c oxidase complex. FixP subunit is required for transferring electrons from donor cytochrome c via its heme groups to FixO subunit. From there, electrons are shuttled to the catalytic binuclear center of FixN subunit where oxygen reduction takes place. The complex also functions as a proton pump. This chain is Cbb3-type cytochrome c oxidase subunit FixP, found in Rhizobium etli (strain ATCC 51251 / DSM 11541 / JCM 21823 / NBRC 15573 / CFN 42).